Consider the following 737-residue polypeptide: DNA mismatch repair protein MLH1 (737 aa).

Disordered regions lie at residues 1–21 (MIDD…ATTI) and 378–416 (TLTS…PAGR). Positions 378 to 400 (TLTSQKSDSPVSQKPSGQKTQKV) are enriched in polar residues.

Belongs to the DNA mismatch repair MutL/HexB family. Heterodimer of MLH1 and PMS1, called MutLalpha, which is the major MMR MutL activity correcting base-base mismatches as well as IDLs. The heterodimer binds double strand DNA independently of a mismatch with positive cooperativity and has more than one DNA binding site. Heterodimer of MLH1 and MLH3, called MutLbeta, which is involved in correction of a specific subset of IDLs when associated with MutSbeta. In terms of tissue distribution, ubiquitous.

It localises to the nucleus. Functionally, involved in DNA mismatch repair (MMR), correcting insertion-deletion loops (IDLs) resulting from DNA replication, DNA damage or from recombination events between non-identical sequences during meiosis. Component of the MutLbeta heterodimer, which probably forms a ternary complex with the MutSbeta heterodimer that initially recognizes the DNA mismatches. This complex is thought to be responsible for directing the downstream MMR events, including strand discrimination, excision, and resynthesis. Plays a major role in promoting meiotic crossing-over and is involved in maintaining the genetic stability of simple sequence repeats by correction of frameshift intermediates. In Arabidopsis thaliana (Mouse-ear cress), this protein is DNA mismatch repair protein MLH1 (MLH1).